We begin with the raw amino-acid sequence, 497 residues long: MORN repeat-containing protein 1 (497 aa).

Positions 1–27 are disordered; it reads MAAAGEGTPSSRGPRRDPPRRPPRNGY. MORN repeat units follow at residues 39–61, 62–84, 86–108, 109–131, 132–154, 155–177, and 178–200; these read YEGE…DGSY, YEGA…WSGD, FSGQ…AGGC, YEGE…DGQV, YQGS…NGDK, YDGD…DGST, and YKGQ…SGVT. 2 disordered regions span residues 393–425 and 468–497; these read GGRS…ATEE and QPPH…PAPR.

In Homo sapiens (Human), this protein is MORN repeat-containing protein 1 (MORN1).